The following is an 89-amino-acid chain: Nucleoside triphosphatase I (89 aa).

A Helicase ATP-binding domain is found at 42–89; that stretch reads FLGLDKMHSLLLFHDTGVGKTITTTFIIKQLKNIYTNWSILLLVKKHL. 55–62 lines the ATP pocket; that stretch reads HDTGVGKT.

Belongs to the helicase family. NPH I subfamily.

The catalysed reaction is a ribonucleoside 5'-triphosphate + H2O = a ribonucleoside 5'-diphosphate + phosphate + H(+). Its function is as follows. Serves two roles in transcription; it acts in concert with viral termination factor/capping enzyme to catalyze release of UUUUUNU-containing nascent RNA from the elongation complex, and it acts by itself as a polymerase elongation factor to facilitate readthrough of intrinsic pause sites. This chain is Nucleoside triphosphatase I (NPH1), found in Swinepox virus (strain Kasza) (SWPV).